The sequence spans 201 residues: Probable chemoreceptor glutamine deamidase CheD 2 (201 aa).

Belongs to the CheD family.

The enzyme catalyses L-glutaminyl-[protein] + H2O = L-glutamyl-[protein] + NH4(+). In terms of biological role, probably deamidates glutamine residues to glutamate on methyl-accepting chemotaxis receptors (MCPs), playing an important role in chemotaxis. This Chromobacterium violaceum (strain ATCC 12472 / DSM 30191 / JCM 1249 / CCUG 213 / NBRC 12614 / NCIMB 9131 / NCTC 9757 / MK) protein is Probable chemoreceptor glutamine deamidase CheD 2.